A 434-amino-acid chain; its full sequence is Nuclear receptor subfamily 1 group I member 2 (434 aa).

The nuclear receptor DNA-binding region spans 38 to 107; that stretch reads PQICRVCGDK…RLRKCLESGM (70 aa). 2 NR C4-type zinc fingers span residues 41–61 and 77–102; these read CRVC…CEGC and CPFR…LRKC. Positions 66-92 match the Bipartite nuclear localization signal motif; it reads RRAMKRNARLRCPFRKGACEITRKTRR. The tract at residues 108–145 is hinge; it reads KKEMIMSDAAVEERRALIKRKKRERIGTQPPGVQGLTE. Positions 146-433 constitute an NR LBD domain; it reads EQRMMIRELM…LMQELFGITG (288 aa). Residues Ser247, 285–288, and His407 contribute to the hyperforin site; that span reads QLRF.

The protein belongs to the nuclear hormone receptor family. NR1 subfamily. Heterodimer with RXRA. Interacts with NCOA1. Interacts (via domain NR LBD) with CRY1 and CRY2 in a ligand-dependent manner.

The protein resides in the nucleus. Functionally, nuclear receptor that binds and is activated by a variety of endogenous and xenobiotic compounds. Transcription factor that activates the transcription of multiple genes involved in the metabolism and secretion of potentially harmful xenobiotics, endogenous compounds and drugs. Response to specific ligands is species-specific, due to differences in the ligand-binding domain. Activated by naturally occurring steroids, such as pregnenolone and progesterone. Binds to a response element in the promoters of the CYP3A4 and ABCB1/MDR1 genes. This chain is Nuclear receptor subfamily 1 group I member 2 (NR1I2), found in Macaca mulatta (Rhesus macaque).